We begin with the raw amino-acid sequence, 597 residues long: Probable translation initiation factor IF-2 (597 aa).

The 218-residue stretch at 4–221 (IRQPIIAVLG…LISGLAQKYL (218 aa)) folds into the tr-type G domain. The interval 13–20 (GHVDHGKT) is G1. 13–20 (GHVDHGKT) contributes to the GTP binding site. A G2 region spans residues 38–42 (GITQH). The interval 77 to 80 (DTPG) is G3. GTP-binding positions include 77–81 (DTPGH) and 131–134 (NKID). The interval 131–134 (NKID) is G4. Residues 199–201 (SAK) form a G5 region.

This sequence belongs to the TRAFAC class translation factor GTPase superfamily. Classic translation factor GTPase family. IF-2 subfamily.

Its function is as follows. Function in general translation initiation by promoting the binding of the formylmethionine-tRNA to ribosomes. Seems to function along with eIF-2. The protein is Probable translation initiation factor IF-2 of Thermococcus sibiricus (strain DSM 12597 / MM 739).